The sequence spans 420 residues: Tyrosine--tRNA ligase (420 aa).

Tyr-33 serves as a coordination point for L-tyrosine. The 'HIGH' region motif lies at 38-47; that stretch reads PTGPSLHAGH. L-tyrosine-binding residues include Tyr-167 and Gln-171. A 'KMSKS' region motif is present at residues 227-231; sequence KFGKS. Lys-230 lines the ATP pocket. One can recognise an S4 RNA-binding domain in the interval 352–418; sequence RTIIDLLVAS…GKKNFAGVQI (67 aa).

The protein belongs to the class-I aminoacyl-tRNA synthetase family. TyrS type 1 subfamily. Homodimer.

The protein localises to the cytoplasm. The catalysed reaction is tRNA(Tyr) + L-tyrosine + ATP = L-tyrosyl-tRNA(Tyr) + AMP + diphosphate + H(+). Catalyzes the attachment of tyrosine to tRNA(Tyr) in a two-step reaction: tyrosine is first activated by ATP to form Tyr-AMP and then transferred to the acceptor end of tRNA(Tyr). The protein is Tyrosine--tRNA ligase of Corynebacterium glutamicum (strain ATCC 13032 / DSM 20300 / JCM 1318 / BCRC 11384 / CCUG 27702 / LMG 3730 / NBRC 12168 / NCIMB 10025 / NRRL B-2784 / 534).